We begin with the raw amino-acid sequence, 65 residues long: Small, acid-soluble spore protein Tlp (65 aa).

Belongs to the Tlp family.

Its subcellular location is the spore core. This Bacillus cereus (strain B4264) protein is Small, acid-soluble spore protein Tlp.